A 274-amino-acid chain; its full sequence is Large ribosomal subunit protein uL2cz/uL2cy (274 aa).

2 disordered regions span residues 1-20 (MAIH…AVDS) and 223-274 (MNPV…RRSK).

Belongs to the universal ribosomal protein uL2 family. Part of the 50S ribosomal subunit.

The protein resides in the plastid. The protein localises to the chloroplast. This Eucalyptus globulus subsp. globulus (Tasmanian blue gum) protein is Large ribosomal subunit protein uL2cz/uL2cy (rpl2-A).